A 419-amino-acid chain; its full sequence is Gamma-glutamyl phosphate reductase (419 aa).

This sequence belongs to the gamma-glutamyl phosphate reductase family.

The protein resides in the cytoplasm. The enzyme catalyses L-glutamate 5-semialdehyde + phosphate + NADP(+) = L-glutamyl 5-phosphate + NADPH + H(+). It participates in amino-acid biosynthesis; L-proline biosynthesis; L-glutamate 5-semialdehyde from L-glutamate: step 2/2. In terms of biological role, catalyzes the NADPH-dependent reduction of L-glutamate 5-phosphate into L-glutamate 5-semialdehyde and phosphate. The product spontaneously undergoes cyclization to form 1-pyrroline-5-carboxylate. The polypeptide is Gamma-glutamyl phosphate reductase (Azobacteroides pseudotrichonymphae genomovar. CFP2).